The chain runs to 272 residues: ATP synthase subunit a (272 aa).

5 helical membrane passes run 41–61 (VLNI…LLIF), 101–121 (LIAP…LMDL), 143–165 (VPSA…ILYY), 221–241 (LIFI…LNVP), and 243–263 (AIFH…LTIV).

The protein belongs to the ATPase A chain family. In terms of assembly, F-type ATPases have 2 components, CF(1) - the catalytic core - and CF(0) - the membrane proton channel. CF(1) has five subunits: alpha(3), beta(3), gamma(1), delta(1), epsilon(1). CF(0) has three main subunits: a(1), b(2) and c(9-12). The alpha and beta chains form an alternating ring which encloses part of the gamma chain. CF(1) is attached to CF(0) by a central stalk formed by the gamma and epsilon chains, while a peripheral stalk is formed by the delta and b chains.

Its subcellular location is the cell inner membrane. Its function is as follows. Key component of the proton channel; it plays a direct role in the translocation of protons across the membrane. This is ATP synthase subunit a from Sodalis glossinidius (strain morsitans).